Here is a 357-residue protein sequence, read N- to C-terminus: Aminotransferase TOXF (357 aa).

Arginine 87 is a binding site for pyridoxal 5'-phosphate. Residue lysine 188 is modified to N6-(pyridoxal phosphate)lysine. A pyridoxal 5'-phosphate-binding site is contributed by glutamate 227.

Belongs to the class-IV pyridoxal-phosphate-dependent aminotransferase family. Pyridoxal 5'-phosphate serves as cofactor.

It participates in mycotoxin biosynthesis; HC-toxin biosynthesis. Functionally, aminotransferase, part of the diffuse TOX2 gene cluster that mediates the biosynthesis of the HC-toxin, cyclic tetrapeptide of structure cyclo(D-Pro-L-Ala-D-Ala-L-Aeo), where Aeo stands for 2-amino-9,10-epoxi-8-oxodecanoic acid. HC-toxin is a determinant of specificity and virulence in the interaction between the producing fungus and its host, maize. TOXF contributes to the synthesis of 2-amino-9,10-epoxi-8-oxodecanoic acid, an essential precursor for the production of the major forms of HC-toxin by the non-ribosomal peptide synthetase HTS1. The sequence is that of Aminotransferase TOXF (TOXF) from Cochliobolus carbonum (Maize leaf spot fungus).